A 1893-amino-acid polypeptide reads, in one-letter code: Endoribonuclease Dicer (1893 aa).

Positions 41–217 constitute a Helicase ATP-binding domain; sequence LLEAALDHNT…DLEEKIQKLE (177 aa). Position 54 to 61 (54 to 61) interacts with ATP; sequence LNSGSGKT. The DECH box signature appears at 165–168; it reads DECH. The interval 400–424 is disordered; the sequence is VSWSDSEDDDDEDEEIEEKEKTETS. Over residues 404 to 416 the composition is skewed to acidic residues; it reads DSEDDDDEDEEIE. In terms of domain architecture, Helicase C-terminal spans 424 to 593; sequence SFPSPFTNIL…SIDCGNTESE (170 aa). Positions 621-713 constitute a Dicer dsRNA-binding fold domain; it reads AIGHINRYCA…MPVGKETVKY (93 aa). Residues 718–737 are disordered; sequence DLHDEEETSVPGRPGSTKRR. Residues 886–1036 form the PAZ domain; sequence KFVEDIEKSE…LVPELCAIHP (151 aa). RNase III domains follow at residues 1249-1380 and 1637-1795; these read TSDM…ETSG and FENF…MDSG. The Mg(2+) site is built by E1293, D1371, E1374, E1676, D1781, and E1784. The region spanning 1820–1885 is the DRBM domain; that stretch reads VPRSPVRELL…ARRALRSLKA (66 aa).

The protein belongs to the helicase family. Dicer subfamily. As to quaternary structure, component of the RISC loading complex (RLC), or micro-RNA (miRNA) loading complex (miRLC), which is composed of dicer1, ago2 and tarbp2; dicer1 and tarbp2 are required to process precursor miRNAs (pre-miRNAs) to mature miRNAs and then load them onto ago2. Note that the trimeric RLC/miRLC is also referred to as RISC. It depends on Mg(2+) as a cofactor. The cofactor is Mn(2+).

It localises to the cytoplasm. The catalysed reaction is Endonucleolytic cleavage to 5'-phosphomonoester.. Functionally, double-stranded RNA (dsRNA) endoribonuclease playing a central role in short dsRNA-mediated post-transcriptional gene silencing. Cleaves naturally occurring long dsRNAs and short hairpin pre-microRNAs (miRNA) into fragments of twenty-one to twenty-three nucleotides with 3' overhang of two nucleotides, producing respectively short interfering RNAs (siRNA) and mature microRNAs. SiRNAs and miRNAs serve as guide to direct the RNA-induced silencing complex (RISC) to complementary RNAs to degrade them or prevent their translation. Gene silencing mediated by siRNAs, also called RNA interference, controls the elimination of transcripts from mobile and repetitive DNA elements of the genome but also the degradation of exogenous RNA of viral origin for instance. The miRNA pathway on the other side is a mean to specifically regulate the expression of target genes. The chain is Endoribonuclease Dicer (dicer1) from Xenopus tropicalis (Western clawed frog).